A 234-amino-acid chain; its full sequence is Purine nucleoside phosphorylase DeoD-type (234 aa).

A purine D-ribonucleoside is bound at residue H4. Phosphate contacts are provided by residues G20, R24, R43, and 87–90 (RIGS). A purine D-ribonucleoside is bound by residues 179-181 (DME) and 203-204 (SD). The active-site Proton donor is D204.

The protein belongs to the PNP/UDP phosphorylase family. Homohexamer; trimer of homodimers.

The catalysed reaction is a purine D-ribonucleoside + phosphate = a purine nucleobase + alpha-D-ribose 1-phosphate. The enzyme catalyses a purine 2'-deoxy-D-ribonucleoside + phosphate = a purine nucleobase + 2-deoxy-alpha-D-ribose 1-phosphate. Functionally, catalyzes the reversible phosphorolytic breakdown of the N-glycosidic bond in the beta-(deoxy)ribonucleoside molecules, with the formation of the corresponding free purine bases and pentose-1-phosphate. The sequence is that of Purine nucleoside phosphorylase DeoD-type from Shewanella oneidensis (strain ATCC 700550 / JCM 31522 / CIP 106686 / LMG 19005 / NCIMB 14063 / MR-1).